A 261-amino-acid chain; its full sequence is 5'-nucleotidase SurE (261 aa).

4 residues coordinate a divalent metal cation: aspartate 8, aspartate 9, serine 39, and asparagine 94.

The protein belongs to the SurE nucleotidase family. The cofactor is a divalent metal cation.

The protein resides in the cytoplasm. It carries out the reaction a ribonucleoside 5'-phosphate + H2O = a ribonucleoside + phosphate. In terms of biological role, nucleotidase that shows phosphatase activity on nucleoside 5'-monophosphates. In Methanopyrus kandleri (strain AV19 / DSM 6324 / JCM 9639 / NBRC 100938), this protein is 5'-nucleotidase SurE.